The chain runs to 54 residues: ATP synthase F(0) complex subunit 8 (54 aa).

Residues 13–35 (ALSLWVCFPLMMLSLSSFLPLTL) form a helical membrane-spanning segment.

The protein belongs to the ATPase protein 8 family. As to quaternary structure, component of the ATP synthase complex composed at least of ATP5F1A/subunit alpha, ATP5F1B/subunit beta, ATP5MC1/subunit c (homooctomer), MT-ATP6/subunit a, MT-ATP8/subunit 8, ATP5ME/subunit e, ATP5MF/subunit f, ATP5MG/subunit g, ATP5MK/subunit k, ATP5MJ/subunit j, ATP5F1C/subunit gamma, ATP5F1D/subunit delta, ATP5F1E/subunit epsilon, ATP5PF/subunit F6, ATP5PB/subunit b, ATP5PD/subunit d, ATP5PO/subunit OSCP. ATP synthase complex consists of a soluble F(1) head domain (subunits alpha(3) and beta(3)) - the catalytic core - and a membrane F(0) domain - the membrane proton channel (subunits c, a, 8, e, f, g, k and j). These two domains are linked by a central stalk (subunits gamma, delta, and epsilon) rotating inside the F1 region and a stationary peripheral stalk (subunits F6, b, d, and OSCP).

Its subcellular location is the mitochondrion membrane. Its function is as follows. Subunit 8, of the mitochondrial membrane ATP synthase complex (F(1)F(0) ATP synthase or Complex V) that produces ATP from ADP in the presence of a proton gradient across the membrane which is generated by electron transport complexes of the respiratory chain. ATP synthase complex consist of a soluble F(1) head domain - the catalytic core - and a membrane F(1) domain - the membrane proton channel. These two domains are linked by a central stalk rotating inside the F(1) region and a stationary peripheral stalk. During catalysis, ATP synthesis in the catalytic domain of F(1) is coupled via a rotary mechanism of the central stalk subunits to proton translocation. In vivo, can only synthesize ATP although its ATP hydrolase activity can be activated artificially in vitro. Part of the complex F(0) domain. In Myxine glutinosa (Atlantic hagfish), this protein is ATP synthase F(0) complex subunit 8.